Here is a 396-residue protein sequence, read N- to C-terminus: Flavohemoprotein (396 aa).

The Globin domain occupies 1 to 136 (MLDAQTIATV…LANVFIHREA (136 aa)). H85 serves as a coordination point for heme b. Active-site charge relay system residues include Y95 and E135. A reductase region spans residues 147-396 (GGWEGTRPFR…YECFGPHKVL (250 aa)). Residues 150–255 (EGTRPFRIVA…AAPAGDFFMN (106 aa)) form the FAD-binding FR-type domain. Residues Y188 and 204–207 (RQYS) each bind FAD. 268–273 (GVGQTP) serves as a coordination point for NADP(+). 389-392 (CFGP) contributes to the FAD binding site.

The protein belongs to the globin family. Two-domain flavohemoproteins subfamily. In the C-terminal section; belongs to the flavoprotein pyridine nucleotide cytochrome reductase family. It depends on heme b as a cofactor. Requires FAD as cofactor.

It carries out the reaction 2 nitric oxide + NADPH + 2 O2 = 2 nitrate + NADP(+) + H(+). The catalysed reaction is 2 nitric oxide + NADH + 2 O2 = 2 nitrate + NAD(+) + H(+). Its function is as follows. Is involved in NO detoxification in an aerobic process, termed nitric oxide dioxygenase (NOD) reaction that utilizes O(2) and NAD(P)H to convert NO to nitrate, which protects the bacterium from various noxious nitrogen compounds. Therefore, plays a central role in the inducible response to nitrosative stress. The protein is Flavohemoprotein of Salmonella typhi.